Here is a 545-residue protein sequence, read N- to C-terminus: Putative transcription factor ecdB (545 aa).

Residues 12 to 39 constitute a DNA-binding region (zn(2)-C6 fungal-type); it reads CDACRSRRVKCDGQRPSCMGCLSRGLDC. The tract at residues 79–99 is disordered; it reads PPPVLLASARPSSNPLSSHED.

It localises to the nucleus. In Aspergillus rugulosus (Emericella rugulosa), this protein is Putative transcription factor ecdB.